The primary structure comprises 427 residues: Serine--tRNA ligase (427 aa).

231 to 233 (TAE) provides a ligand contact to L-serine. 262 to 264 (RSE) provides a ligand contact to ATP. L-serine is bound at residue Glu285. 349 to 352 (EISS) serves as a coordination point for ATP. An L-serine-binding site is contributed by Ser385.

It belongs to the class-II aminoacyl-tRNA synthetase family. Type-1 seryl-tRNA synthetase subfamily. As to quaternary structure, homodimer. The tRNA molecule binds across the dimer.

The protein localises to the cytoplasm. The catalysed reaction is tRNA(Ser) + L-serine + ATP = L-seryl-tRNA(Ser) + AMP + diphosphate + H(+). The enzyme catalyses tRNA(Sec) + L-serine + ATP = L-seryl-tRNA(Sec) + AMP + diphosphate + H(+). It participates in aminoacyl-tRNA biosynthesis; selenocysteinyl-tRNA(Sec) biosynthesis; L-seryl-tRNA(Sec) from L-serine and tRNA(Sec): step 1/1. In terms of biological role, catalyzes the attachment of serine to tRNA(Ser). Is also able to aminoacylate tRNA(Sec) with serine, to form the misacylated tRNA L-seryl-tRNA(Sec), which will be further converted into selenocysteinyl-tRNA(Sec). This chain is Serine--tRNA ligase, found in Allorhizobium ampelinum (strain ATCC BAA-846 / DSM 112012 / S4) (Agrobacterium vitis (strain S4)).